The sequence spans 178 residues: Crossover junction endodeoxyribonuclease RuvC (178 aa).

Catalysis depends on residues Asp11, Glu71, and Asp143. Mg(2+) contacts are provided by Asp11, Glu71, and Asp143.

Belongs to the RuvC family. In terms of assembly, homodimer which binds Holliday junction (HJ) DNA. The HJ becomes 2-fold symmetrical on binding to RuvC with unstacked arms; it has a different conformation from HJ DNA in complex with RuvA. In the full resolvosome a probable DNA-RuvA(4)-RuvB(12)-RuvC(2) complex forms which resolves the HJ. It depends on Mg(2+) as a cofactor.

It is found in the cytoplasm. The catalysed reaction is Endonucleolytic cleavage at a junction such as a reciprocal single-stranded crossover between two homologous DNA duplexes (Holliday junction).. Its function is as follows. The RuvA-RuvB-RuvC complex processes Holliday junction (HJ) DNA during genetic recombination and DNA repair. Endonuclease that resolves HJ intermediates. Cleaves cruciform DNA by making single-stranded nicks across the HJ at symmetrical positions within the homologous arms, yielding a 5'-phosphate and a 3'-hydroxyl group; requires a central core of homology in the junction. The consensus cleavage sequence is 5'-(A/T)TT(C/G)-3'. Cleavage occurs on the 3'-side of the TT dinucleotide at the point of strand exchange. HJ branch migration catalyzed by RuvA-RuvB allows RuvC to scan DNA until it finds its consensus sequence, where it cleaves and resolves the cruciform DNA. The chain is Crossover junction endodeoxyribonuclease RuvC from Neisseria meningitidis serogroup A / serotype 4A (strain DSM 15465 / Z2491).